Consider the following 252-residue polypeptide: DNA-directed RNA polymerase III subunit rpc8 (252 aa).

The tract at residues 214–252 is disordered; it reads WTNQSAGDDDENEEDGGENQDDEVAEDDGGEEPTIEEDE. The span at 220–252 shows a compositional bias: acidic residues; the sequence is GDDDENEEDGGENQDDEVAEDDGGEEPTIEEDE.

The protein belongs to the eukaryotic RPB7/RPC8 RNA polymerase subunit family. In terms of assembly, component of the RNA polymerase III (Pol III) complex consisting of several subunits.

The protein localises to the nucleus. Its function is as follows. DNA-dependent RNA polymerase catalyzes the transcription of DNA into RNA using the four ribonucleoside triphosphates as substrates. The protein is DNA-directed RNA polymerase III subunit rpc8 (polr3h-1) of Dictyostelium discoideum (Social amoeba).